A 689-amino-acid polypeptide reads, in one-letter code: Methionine--tRNA ligase (689 aa).

The 'HIGH' region signature appears at 15–25 (PYANGPVHIGH). 4 residues coordinate Zn(2+): Cys-147, Cys-150, Cys-160, and Cys-163. Residues 342 to 346 (KISTS) carry the 'KMSKS' region motif. An ATP-binding site is contributed by Thr-345. In terms of domain architecture, tRNA-binding spans 588 to 689 (DFAKMDIRVA…AVVNAGSMIG (102 aa)).

The protein belongs to the class-I aminoacyl-tRNA synthetase family. MetG type 1 subfamily. Homodimer. The cofactor is Zn(2+).

It is found in the cytoplasm. The enzyme catalyses tRNA(Met) + L-methionine + ATP = L-methionyl-tRNA(Met) + AMP + diphosphate. Its function is as follows. Is required not only for elongation of protein synthesis but also for the initiation of all mRNA translation through initiator tRNA(fMet) aminoacylation. The protein is Methionine--tRNA ligase of Cytophaga hutchinsonii (strain ATCC 33406 / DSM 1761 / CIP 103989 / NBRC 15051 / NCIMB 9469 / D465).